Consider the following 89-residue polypeptide: Large ribosomal subunit protein eL43 (89 aa).

The segment at 1–28 is disordered; it reads MVKKSKVGSTGRFGARYGRKAKRTVKDI. Residues 38 to 59 form a C4-type zinc finger; that stretch reads CPKCDRPGVKRTHAGIWKCRKC.

The protein belongs to the eukaryotic ribosomal protein eL43 family. The cofactor is Zn(2+).

The sequence is that of Large ribosomal subunit protein eL43 from Methanosphaera stadtmanae (strain ATCC 43021 / DSM 3091 / JCM 11832 / MCB-3).